The sequence spans 179 residues: ATP synthase subunit delta (179 aa).

It belongs to the ATPase delta chain family. As to quaternary structure, F-type ATPases have 2 components, F(1) - the catalytic core - and F(0) - the membrane proton channel. F(1) has five subunits: alpha(3), beta(3), gamma(1), delta(1), epsilon(1). F(0) has three main subunits: a(1), b(2) and c(10-14). The alpha and beta chains form an alternating ring which encloses part of the gamma chain. F(1) is attached to F(0) by a central stalk formed by the gamma and epsilon chains, while a peripheral stalk is formed by the delta and b chains.

The protein localises to the cell membrane. Its function is as follows. F(1)F(0) ATP synthase produces ATP from ADP in the presence of a proton or sodium gradient. F-type ATPases consist of two structural domains, F(1) containing the extramembraneous catalytic core and F(0) containing the membrane proton channel, linked together by a central stalk and a peripheral stalk. During catalysis, ATP synthesis in the catalytic domain of F(1) is coupled via a rotary mechanism of the central stalk subunits to proton translocation. This protein is part of the stalk that links CF(0) to CF(1). It either transmits conformational changes from CF(0) to CF(1) or is implicated in proton conduction. This chain is ATP synthase subunit delta, found in Ureaplasma parvum serovar 3 (strain ATCC 27815 / 27 / NCTC 11736).